A 200-amino-acid chain; its full sequence is MLAKKLVTAQKRGETRALCLGLGMVACSMMMYFFIGITIVPFYTKSVWTTETICKVLKANIKDKTHCTNSEGSEDEDIFHYPCLQVWVNLTASGQEVMLYHTEDTLERNPKCSYVPGNSENSKEVKARIETIASNFKKYQTFPCYYDPGGMQTNVILSRLYPPKGLLFTFLWPTLMFTGGCLIIVLVKISQYFSVLSARQ.

At 1 to 19 (MLAKKLVTAQKRGETRALC) the chain is on the cytoplasmic side. The chain crosses the membrane as a helical span at residues 20-40 (LGLGMVACSMMMYFFIGITIV). Residues 41–166 (PFYTKSVWTT…LSRLYPPKGL (126 aa)) are Extracellular-facing. N-linked (GlcNAc...) asparagine glycosylation occurs at N89. A helical transmembrane segment spans residues 167 to 187 (LFTFLWPTLMFTGGCLIIVLV). At 188 to 200 (KISQYFSVLSARQ) the chain is on the cytoplasmic side.

It belongs to the KCNMB (TC 8.A.14.1) family. KCNMB1 subfamily. In terms of assembly, probably interacts with KCNMA1 tetramer.

The protein localises to the membrane. Its function is as follows. Probable regulatory subunit of the calcium activated potassium KCNMA1 (maxiK) channel that modulates the calcium sensitivity and gating kinetics of KCNMA1, thereby contributing to KCNMA1 channel diversity. Increases the apparent Ca(2+)/voltage sensitivity of the KCNMA1 channel. This Coturnix japonica (Japanese quail) protein is Putative calcium-activated potassium channel subunit beta (KCNMB1).